The primary structure comprises 202 residues: Pyridoxal 5'-phosphate synthase subunit PdxT (202 aa).

50–52 (GES) serves as a coordination point for L-glutamine. Cys-82 (nucleophile) is an active-site residue. Residues Arg-111 and 140–141 (IR) contribute to the L-glutamine site. Catalysis depends on charge relay system residues His-176 and Glu-178.

Belongs to the glutaminase PdxT/SNO family. In terms of assembly, in the presence of PdxS, forms a dodecamer of heterodimers. Only shows activity in the heterodimer.

The enzyme catalyses aldehydo-D-ribose 5-phosphate + D-glyceraldehyde 3-phosphate + L-glutamine = pyridoxal 5'-phosphate + L-glutamate + phosphate + 3 H2O + H(+). The catalysed reaction is L-glutamine + H2O = L-glutamate + NH4(+). It functions in the pathway cofactor biosynthesis; pyridoxal 5'-phosphate biosynthesis. Functionally, catalyzes the hydrolysis of glutamine to glutamate and ammonia as part of the biosynthesis of pyridoxal 5'-phosphate. The resulting ammonia molecule is channeled to the active site of PdxS. The sequence is that of Pyridoxal 5'-phosphate synthase subunit PdxT from Streptomyces coelicolor (strain ATCC BAA-471 / A3(2) / M145).